Reading from the N-terminus, the 431-residue chain is Probable prephenate dehydrogenase [NADP(+)] (431 aa).

NADP(+) is bound at residue 5–34 (FQVGIIGFGDMGRLYAEYISKAGWRVNVCD). The region spanning 5 to 285 (FQVGIIGFGD…GENMDRNSSG (281 aa)) is the Prephenate/arogenate dehydrogenase domain.

Belongs to the prephenate/arogenate dehydrogenase family.

It localises to the cytoplasm. It carries out the reaction prephenate + NADP(+) = 3-(4-hydroxyphenyl)pyruvate + CO2 + NADPH. It functions in the pathway amino-acid biosynthesis; L-tyrosine biosynthesis; (4-hydroxyphenyl)pyruvate from prephenate (NADP(+) route): step 1/1. The protein is Probable prephenate dehydrogenase [NADP(+)] (tyr1) of Schizosaccharomyces pombe (strain 972 / ATCC 24843) (Fission yeast).